Reading from the N-terminus, the 544-residue chain is Protein angel homolog 2 (544 aa).

It belongs to the CCR4/nocturin family.

This is Protein angel homolog 2 (ANGEL2) from Bos taurus (Bovine).